The primary structure comprises 130 residues: Seminal plasma protein pB1 (130 aa).

The N-terminal stretch at 1 to 25 (MAPRLGIFLLWAGVSVFLPLDPVNG) is a signal peptide. Fibronectin type-II domains lie at 39–83 (TSDD…YCRS) and 84–130 (TDYA…WRYC). 4 cysteine pairs are disulfide-bonded: C44/C68, C58/C81, C89/C115, and C103/C130.

This sequence belongs to the seminal plasma protein family. As to expression, component of seminal plasma.

It is found in the secreted. Its function is as follows. May form a complex with spermadhesin AQN-1 which possesses phosphorylcholine-binding activity. This chain is Seminal plasma protein pB1, found in Sus scrofa (Pig).